Here is a 281-residue protein sequence, read N- to C-terminus: Elongation factor Ts (281 aa).

The involved in Mg(2+) ion dislocation from EF-Tu stretch occupies residues 80 to 83 (TDFV).

This sequence belongs to the EF-Ts family.

The protein localises to the cytoplasm. Functionally, associates with the EF-Tu.GDP complex and induces the exchange of GDP to GTP. It remains bound to the aminoacyl-tRNA.EF-Tu.GTP complex up to the GTP hydrolysis stage on the ribosome. This Vibrio atlanticus (strain LGP32) (Vibrio splendidus (strain Mel32)) protein is Elongation factor Ts.